The sequence spans 374 residues: Putative glutamate--cysteine ligase 2 (374 aa).

This sequence belongs to the glutamate--cysteine ligase type 2 family. YbdK subfamily.

The catalysed reaction is L-cysteine + L-glutamate + ATP = gamma-L-glutamyl-L-cysteine + ADP + phosphate + H(+). In terms of biological role, ATP-dependent carboxylate-amine ligase which exhibits weak glutamate--cysteine ligase activity. This chain is Putative glutamate--cysteine ligase 2, found in Laribacter hongkongensis (strain HLHK9).